The primary structure comprises 198 residues: MMEFIYPHTHLVAGVDEVGRGPLVGAVVTAAVILDPLKPIVGLADSKKLSEKRRLALFDEIKEKAIAWSLGRAEPHEIDELNILHATMLAMQRAVAGLAVTPEYVLVDGNRCPALPMPSMAVVKGDSRVAEISAASILAKVTRDAEMAELDLTFPQYGFAQHKGYPTAFHLERLAEHGATAHHRRSFAPVRRALGIAS.

The region spanning 10–198 is the RNase H type-2 domain; the sequence is HLVAGVDEVG…PVRRALGIAS (189 aa). Residues D16, E17, and D108 each coordinate a divalent metal cation.

It belongs to the RNase HII family. Mn(2+) serves as cofactor. It depends on Mg(2+) as a cofactor.

Its subcellular location is the cytoplasm. The catalysed reaction is Endonucleolytic cleavage to 5'-phosphomonoester.. Endonuclease that specifically degrades the RNA of RNA-DNA hybrids. The polypeptide is Ribonuclease HII (Cronobacter sakazakii (strain ATCC BAA-894) (Enterobacter sakazakii)).